A 159-amino-acid chain; its full sequence is Globin D, coelomic (159 aa).

Glycine 2 is modified (N-acetylglycine). Residues 12–158 form the Globin domain; the sequence is DLTPAEKDLI…VQGVLITKHA (147 aa). Histidine 74 and histidine 105 together coordinate heme b.

The protein belongs to the globin family. In terms of assembly, homodimer.

The polypeptide is Globin D, coelomic (Molpadia arenicola (Sea cucumber)).